We begin with the raw amino-acid sequence, 302 residues long: Homoserine O-acetyltransferase (302 aa).

Catalysis depends on C142, which acts as the Acyl-thioester intermediate. K163 and S192 together coordinate substrate. H235 (proton acceptor) is an active-site residue. E237 is an active-site residue. R249 lines the substrate pocket.

It belongs to the MetA family.

It is found in the cytoplasm. The enzyme catalyses L-homoserine + acetyl-CoA = O-acetyl-L-homoserine + CoA. It functions in the pathway amino-acid biosynthesis; L-methionine biosynthesis via de novo pathway; O-acetyl-L-homoserine from L-homoserine: step 1/1. In terms of biological role, transfers an acetyl group from acetyl-CoA to L-homoserine, forming acetyl-L-homoserine. The sequence is that of Homoserine O-acetyltransferase from Bacillus pumilus (strain SAFR-032).